The sequence spans 119 residues: DNA-binding protein inhibitor ID-3 (119 aa).

The 53-residue stretch at 28 to 80 (RGKGPAAEEPLSLLDDMNHCYSRLRELVPGVPRGTQLSQVEILQRVIDYILDL) folds into the bHLH domain.

In terms of assembly, homodimer, and heterodimer with other HLH proteins. Interacts with COPS5 and COPS7A. Interacts with IFI204. Interacts with GATA4 and NKX2-5. Interacts with ANKRD2; both proteins cooperate in myoblast differentiation. Interacts with CLOCK and BMAL1. As to expression, expressed abundantly in lung, kidney and adrenal gland, but not in adult brain.

It localises to the nucleus. Its function is as follows. Transcriptional regulator (lacking a basic DNA binding domain) which negatively regulates the basic helix-loop-helix (bHLH) transcription factors by forming heterodimers and inhibiting their DNA binding and transcriptional activity. Implicated in regulating a variety of cellular processes, including cellular growth, senescence, differentiation, apoptosis, angiogenesis, and neoplastic transformation. Involved in myogenesis by inhibiting skeletal muscle and cardiac myocyte differentiation and promoting muscle precursor cells proliferation. Inhibits the binding of E2A-containing protein complexes to muscle creatine kinase E-box enhancer. Regulates the circadian clock by repressing the transcriptional activator activity of the CLOCK-BMAL1 heterodimer. This Homo sapiens (Human) protein is DNA-binding protein inhibitor ID-3 (ID3).